Reading from the N-terminus, the 485-residue chain is GTPase Der (485 aa).

2 EngA-type G domains span residues 3 to 167 (PTIA…PEPE) and 176 to 349 (PVFA…NAAM). GTP is bound by residues 9 to 16 (GRPNVGKS), 56 to 60 (DTGGF), 119 to 122 (NKGE), 182 to 189 (GRPNVGKS), 229 to 233 (DTAGV), and 294 to 297 (NKWD). Residues 350–434 (IKMPTPKITR…PLRIQYNVSE (85 aa)) enclose the KH-like domain. A disordered region spans residues 435–485 (NPYENAEDKPKKKPLRRVSLSNRIEKREGRKEEKNRFKKKTKVSVKKQFSK). Positions 457 to 469 (RIEKREGRKEEKN) are enriched in basic and acidic residues. Residues 470–485 (RFKKKTKVSVKKQFSK) are compositionally biased toward basic residues.

It belongs to the TRAFAC class TrmE-Era-EngA-EngB-Septin-like GTPase superfamily. EngA (Der) GTPase family. Associates with the 50S ribosomal subunit.

In terms of biological role, GTPase that plays an essential role in the late steps of ribosome biogenesis. This is GTPase Der from Neisseria meningitidis serogroup C / serotype 2a (strain ATCC 700532 / DSM 15464 / FAM18).